Consider the following 524-residue polypeptide: GMP synthase [glutamine-hydrolyzing] (524 aa).

Residues Thr12–Ser201 enclose the Glutamine amidotransferase type-1 domain. Catalysis depends on Cys88, which acts as the Nucleophile. Residues His175 and Glu177 contribute to the active site. The region spanning Trp202–Arg399 is the GMPS ATP-PPase domain. Ser230 to Thr236 contacts ATP. 4 residues coordinate XMP: Arg303, Asp461, Lys516, and Glu522.

As to quaternary structure, homodimer. It depends on Mg(2+) as a cofactor.

The protein localises to the cytoplasm. It localises to the cytosol. The enzyme catalyses XMP + L-glutamine + ATP + H2O = GMP + L-glutamate + AMP + diphosphate + 2 H(+). Its pathway is purine metabolism; GMP biosynthesis; GMP from XMP (L-Gln route): step 1/1. Catalyzes the conversion of xanthine monophosphate (XMP) to GMP in the presence of glutamine and ATP through an adenyl-XMP intermediate. The chain is GMP synthase [glutamine-hydrolyzing] (GUA1) from Kluyveromyces lactis (strain ATCC 8585 / CBS 2359 / DSM 70799 / NBRC 1267 / NRRL Y-1140 / WM37) (Yeast).